The chain runs to 348 residues: Holliday junction branch migration complex subunit RuvB (348 aa).

Positions 1-183 (MTDPSRLVTP…FGIPVRLNFY (183 aa)) are large ATPase domain (RuvB-L). Residues L22, R23, G64, K67, T68, T69, 130–132 (EDF), R173, Y183, and R220 each bind ATP. Residue T68 coordinates Mg(2+). A small ATPAse domain (RuvB-S) region spans residues 184–254 (TIEELESIVS…IADHALGALE (71 aa)). The segment at 257-348 (AAGLDAMDRR…FGLFGGEEEA (92 aa)) is head domain (RuvB-H). Residues R293, R312, and R317 each contribute to the DNA site.

This sequence belongs to the RuvB family. Homohexamer. Forms an RuvA(8)-RuvB(12)-Holliday junction (HJ) complex. HJ DNA is sandwiched between 2 RuvA tetramers; dsDNA enters through RuvA and exits via RuvB. An RuvB hexamer assembles on each DNA strand where it exits the tetramer. Each RuvB hexamer is contacted by two RuvA subunits (via domain III) on 2 adjacent RuvB subunits; this complex drives branch migration. In the full resolvosome a probable DNA-RuvA(4)-RuvB(12)-RuvC(2) complex forms which resolves the HJ.

The protein resides in the cytoplasm. It catalyses the reaction ATP + H2O = ADP + phosphate + H(+). In terms of biological role, the RuvA-RuvB-RuvC complex processes Holliday junction (HJ) DNA during genetic recombination and DNA repair, while the RuvA-RuvB complex plays an important role in the rescue of blocked DNA replication forks via replication fork reversal (RFR). RuvA specifically binds to HJ cruciform DNA, conferring on it an open structure. The RuvB hexamer acts as an ATP-dependent pump, pulling dsDNA into and through the RuvAB complex. RuvB forms 2 homohexamers on either side of HJ DNA bound by 1 or 2 RuvA tetramers; 4 subunits per hexamer contact DNA at a time. Coordinated motions by a converter formed by DNA-disengaged RuvB subunits stimulates ATP hydrolysis and nucleotide exchange. Immobilization of the converter enables RuvB to convert the ATP-contained energy into a lever motion, pulling 2 nucleotides of DNA out of the RuvA tetramer per ATP hydrolyzed, thus driving DNA branch migration. The RuvB motors rotate together with the DNA substrate, which together with the progressing nucleotide cycle form the mechanistic basis for DNA recombination by continuous HJ branch migration. Branch migration allows RuvC to scan DNA until it finds its consensus sequence, where it cleaves and resolves cruciform DNA. This chain is Holliday junction branch migration complex subunit RuvB, found in Rhodopseudomonas palustris (strain HaA2).